Reading from the N-terminus, the 385-residue chain is Leucine aminopeptidase 1 (385 aa).

The first 19 residues, 1-19 (MKFPSFLSLGIAASTTALA), serve as a signal peptide directing secretion. Positions 20–87 (ALPDQKPIGD…FPRAFAKTAV (68 aa)) are excised as a propeptide. Asparagine 177 carries N-linked (GlcNAc...) asparagine glycosylation. Zn(2+) is bound by residues histidine 185 and aspartate 204. The N-linked (GlcNAc...) asparagine glycan is linked to asparagine 229. Glutamate 243 and aspartate 270 together coordinate Zn(2+). Cysteine 319 and cysteine 323 are joined by a disulfide. Position 352 (histidine 352) interacts with Zn(2+).

It belongs to the peptidase M28 family. M28E subfamily. In terms of assembly, monomer. Requires Zn(2+) as cofactor.

Its subcellular location is the secreted. Its function is as follows. Extracellular aminopeptidase that allows assimilation of proteinaceous substrates. The sequence is that of Leucine aminopeptidase 1 (LAP1) from Ajellomyces dermatitidis (strain ER-3 / ATCC MYA-2586) (Blastomyces dermatitidis).